Consider the following 133-residue polypeptide: ATP synthase epsilon chain, sodium ion specific (133 aa).

Belongs to the ATPase epsilon chain family. In terms of assembly, F-type ATPases have 2 components, CF(1) - the catalytic core - and CF(0) - the membrane proton channel. CF(1) has five subunits: alpha(3), beta(3), gamma(1), delta(1), epsilon(1). CF(0) has three main subunits: a, b and c.

Its subcellular location is the cell membrane. Inhibited by nitrate. Functionally, produces ATP from ADP in the presence of a sodium gradient across the membrane. The polypeptide is ATP synthase epsilon chain, sodium ion specific (atpC) (Acetobacterium woodii (strain ATCC 29683 / DSM 1030 / JCM 2381 / KCTC 1655 / WB1)).